A 495-amino-acid polypeptide reads, in one-letter code: Glutelin type-B 2 (495 aa).

An N-terminal signal peptide occupies residues 1–24 (MATTIFSRFSIYFCAMLLCQGSMA). 2 disulfide bridges follow: cysteine 45-cysteine 78 and cysteine 121-cysteine 305. Cupin type-1 domains are found at residues 50–245 (LQAF…VAAK) and 311–460 (VNIE…EQAR). The tract at residues 464 to 495 (NNRGEEHGAFTPRFQQQYYPGFSNESESETSE) is disordered.

This sequence belongs to the 11S seed storage protein (globulins) family. In terms of assembly, hexamer; each subunit is composed of an acidic and a basic chain derived from a single precursor and linked by a disulfide bond.

Functionally, seed storage protein. The polypeptide is Glutelin type-B 2 (GLUB2) (Oryza sativa subsp. japonica (Rice)).